A 361-amino-acid chain; its full sequence is 5-formaminoimidazole-4-carboxamide-1-(beta)-D-ribofuranosyl 5'-monophosphate synthetase (361 aa).

2 residues coordinate 5-amino-1-(5-phospho-beta-D-ribosyl)imidazole-4-carboxamide: H27 and S94. The ATP-grasp domain maps to 116 to 348; sequence RAILRWEAER…MGQRIAKEIK (233 aa). ATP-binding positions include 146–208 and E230; that span reads PDDI…ANYC. Position 258 (N258) interacts with 5-amino-1-(5-phospho-beta-D-ribosyl)imidazole-4-carboxamide. Mg(2+) is bound by residues Q297 and E310.

Belongs to the phosphohexose mutase family. Mg(2+) is required as a cofactor. The cofactor is Mn(2+).

The catalysed reaction is 5-amino-1-(5-phospho-beta-D-ribosyl)imidazole-4-carboxamide + formate + ATP = 5-formamido-1-(5-phospho-D-ribosyl)imidazole-4-carboxamide + ADP + phosphate. Its pathway is purine metabolism; IMP biosynthesis via de novo pathway; 5-formamido-1-(5-phospho-D-ribosyl)imidazole-4-carboxamide from 5-amino-1-(5-phospho-D-ribosyl)imidazole-4-carboxamide (formate route): step 1/1. Its function is as follows. Catalyzes the ATP- and formate-dependent formylation of 5-aminoimidazole-4-carboxamide-1-beta-d-ribofuranosyl 5'-monophosphate (AICAR) to 5-formaminoimidazole-4-carboxamide-1-beta-d-ribofuranosyl 5'-monophosphate (FAICAR) in the absence of folates. This Methanococcus maripaludis (strain C6 / ATCC BAA-1332) protein is 5-formaminoimidazole-4-carboxamide-1-(beta)-D-ribofuranosyl 5'-monophosphate synthetase.